The chain runs to 247 residues: 2,3-bisphosphoglycerate-dependent phosphoglycerate mutase (247 aa).

Substrate-binding positions include 9–16 (RHGESEWN), 22–23 (TG), arginine 61, 88–91 (ERHY), lysine 99, 115–116 (RR), and 183–184 (GN). Residue histidine 10 is the Tele-phosphohistidine intermediate of the active site. Glutamate 88 (proton donor/acceptor) is an active-site residue.

This sequence belongs to the phosphoglycerate mutase family. BPG-dependent PGAM subfamily.

It catalyses the reaction (2R)-2-phosphoglycerate = (2R)-3-phosphoglycerate. Its pathway is carbohydrate degradation; glycolysis; pyruvate from D-glyceraldehyde 3-phosphate: step 3/5. Catalyzes the interconversion of 2-phosphoglycerate and 3-phosphoglycerate. This is 2,3-bisphosphoglycerate-dependent phosphoglycerate mutase from Nocardioides sp. (strain ATCC BAA-499 / JS614).